A 258-amino-acid chain; its full sequence is SMH class II histocompatibility antigen, beta-1 chain (258 aa).

The N-terminal stretch at 1–29 (MMVLPVPVAPWTAALTVLLMVLNKSVVQG) is a signal peptide. A beta-1 region spans residues 30–121 (RTTPENYLFR…LNQRLSQSLI (92 aa)). The Extracellular portion of the chain corresponds to 30 to 225 (RTTPENYLFR…RAQSDSARNK (196 aa)). Intrachain disulfides connect C44/C106 and C144/C200. Positions 122–215 (AQPKVHVSPS…SLDRPITVEW (94 aa)) are beta-2. Residues 124-212 (PKVHVSPSKG…EHPSLDRPIT (89 aa)) enclose the Ig-like C1-type domain. The segment at 216–225 (RAQSDSARNK) is connecting peptide. N-linked (GlcNAc...) asparagine glycosylation is present at N224. A helical transmembrane segment spans residues 226 to 246 (TLTGVGGLVLGLIFLAVGLIM). Over 247–258 (HVRSKKAQRGSR) the chain is Cytoplasmic.

It belongs to the MHC class II family.

It is found in the membrane. This Spalax ehrenbergi (Middle East blind mole rat) protein is SMH class II histocompatibility antigen, beta-1 chain.